Consider the following 87-residue polypeptide: MAHKKGTGSTRNGRDSRSQRLGVKRYGGQVVKAGNILIRQRGTKVHPGNNVGRGNDDTLFALIDGIVTFEYKTKSRRKVSVYPVAAE.

Residues 1-24 (MAHKKGTGSTRNGRDSRSQRLGVK) form a disordered region.

This sequence belongs to the bacterial ribosomal protein bL27 family.

This is Large ribosomal subunit protein bL27 from Crocosphaera subtropica (strain ATCC 51142 / BH68) (Cyanothece sp. (strain ATCC 51142)).